The primary structure comprises 556 residues: MALGLFRVCLVVVTAIINHPLLFPRENTTVPENEEEIIRQMQAHQEKLQLEQLRLEEEMARLAADKEAEKEALERVAEEGQQQNESRTAWDLWSTLCMILFLVIEVWRQDHQDAPSPECLGSDEDELPDLEGAPLRGLTLPNRATLDHFYERCIRGATADAARTREFVEGFVDDLLEALRSLCSRDSDMEVEDFIGVDSMYENWQVNKPLLCDLFVPFMPPEPYHFHPELWCSSRSVPLDRQGYGQIKVVRADEDTLGCICGKTKLGEDMLCLLHGRNNVVHHGSKAADPLCAPNSPYLDTMRVMKWFQTALTRAWHRIEHKYEFDLAFGQLDTPGSLKIRFRSGKFMPFNLIPVIQCDDSDLYFVSHLAREPGGGTRASSTDWLLSFAVYERHFLRVTSKALPEGACHLSCLQIASFLLSKQSRLTGPSGLGSYHLKTALLHLLLARRPADWKAEQLDARLHELLCFLEKSLLEKKLQHFFIGNRKVPQAMGLPEAVRRAEPLNLFRPFVLQRSLYRKTVDSFYEMLKNAPALISEYSLHIPSDHASLPPKTVIL.

Residues 1-15 form the signal peptide; that stretch reads MALGLFRVCLVVVTA. Over 16 to 88 the chain is Extracellular; sequence IINHPLLFPR…EGQQQNESRT (73 aa). Asn-27 and Asn-84 each carry an N-linked (GlcNAc...) asparagine glycan. A coiled-coil region spans residues 32–87; that stretch reads ENEEEIIRQMQAHQEKLQLEQLRLEEEMARLAADKEAEKEALERVAEEGQQQNESR. The helical transmembrane segment at 89 to 107 threads the bilayer; it reads AWDLWSTLCMILFLVIEVW. Residues 108 to 556 lie on the Cytoplasmic side of the membrane; it reads RQDHQDAPSP…ASLPPKTVIL (449 aa).

This sequence belongs to the ITPRIP family. In terms of assembly, interacts with ITPR.

The protein localises to the cell membrane. It is found in the nucleus outer membrane. Its function is as follows. Enhances Ca(2+)-mediated inhibition of inositol 1,4,5-triphosphate receptor (ITPR) Ca(2+) release. The chain is Inositol 1,4,5-trisphosphate receptor-interacting protein (ITPRIP) from Bos taurus (Bovine).